We begin with the raw amino-acid sequence, 474 residues long: 3-isopropylmalate dehydratase large subunit (474 aa).

[4Fe-4S] cluster is bound by residues Cys-353, Cys-414, and Cys-417.

This sequence belongs to the aconitase/IPM isomerase family. LeuC type 1 subfamily. As to quaternary structure, heterodimer of LeuC and LeuD. Requires [4Fe-4S] cluster as cofactor.

The enzyme catalyses (2R,3S)-3-isopropylmalate = (2S)-2-isopropylmalate. It functions in the pathway amino-acid biosynthesis; L-leucine biosynthesis; L-leucine from 3-methyl-2-oxobutanoate: step 2/4. Catalyzes the isomerization between 2-isopropylmalate and 3-isopropylmalate, via the formation of 2-isopropylmaleate. This is 3-isopropylmalate dehydratase large subunit from Pseudomonas aeruginosa (strain LESB58).